The following is a 121-amino-acid chain: Large ribosomal subunit protein bL12 (121 aa).

The protein belongs to the bacterial ribosomal protein bL12 family. In terms of assembly, homodimer. Part of the ribosomal stalk of the 50S ribosomal subunit. Forms a multimeric L10(L12)X complex, where L10 forms an elongated spine to which 2 to 4 L12 dimers bind in a sequential fashion. Binds GTP-bound translation factors.

In terms of biological role, forms part of the ribosomal stalk which helps the ribosome interact with GTP-bound translation factors. Is thus essential for accurate translation. The chain is Large ribosomal subunit protein bL12 from Ureaplasma parvum serovar 3 (strain ATCC 27815 / 27 / NCTC 11736).